The following is a 339-amino-acid chain: Deubiquitinase and deneddylase Dub2 (339 aa).

Residues 36–56 (IIIALFLIVISCGLILCAYTF) form a helical membrane-spanning segment. Residues H203, D220, and C282 contribute to the active site.

The protein belongs to the peptidase C48 family.

Its subcellular location is the secreted. It localises to the host cell. It is found in the membrane. Functionally, effector proteins function to alter host cell physiology and promote bacterial survival in host tissues. This protease possesses deubiquitinating and deneddylating activities. This chain is Deubiquitinase and deneddylase Dub2 (cdu2), found in Chlamydia trachomatis serovar A (strain ATCC VR-571B / DSM 19440 / HAR-13).